Here is a 655-residue protein sequence, read N- to C-terminus: Acetyl-coenzyme A synthetase (655 aa).

CoA-binding positions include 196–199 (RGGR) and Thr316. ATP contacts are provided by residues 392–394 (GEP), 416–421 (DTWWQT), Asp508, and Arg523. Residue Ser531 participates in CoA binding. Arg534 serves as a coordination point for ATP. Mg(2+)-binding residues include Val545, His547, and Val550. At Lys620 the chain carries N6-acetyllysine.

This sequence belongs to the ATP-dependent AMP-binding enzyme family. Mg(2+) serves as cofactor. Post-translationally, acetylated. Deacetylation by the SIR2-homolog deacetylase activates the enzyme.

The catalysed reaction is acetate + ATP + CoA = acetyl-CoA + AMP + diphosphate. Functionally, catalyzes the conversion of acetate into acetyl-CoA (AcCoA), an essential intermediate at the junction of anabolic and catabolic pathways. AcsA undergoes a two-step reaction. In the first half reaction, AcsA combines acetate with ATP to form acetyl-adenylate (AcAMP) intermediate. In the second half reaction, it can then transfer the acetyl group from AcAMP to the sulfhydryl group of CoA, forming the product AcCoA. The protein is Acetyl-coenzyme A synthetase of Nitrosomonas europaea (strain ATCC 19718 / CIP 103999 / KCTC 2705 / NBRC 14298).